The sequence spans 414 residues: MRLRFWLLIWLLLGFISHQPTPVINSLAVYRHRETDFGVGVRDHPGQHGKTPSPQKLDNLIIIIIGFLRRYTFNVLFCTSCLCVSFLKTIFWSRNGHDGSMDVQQRAWRSNRSRQKGLRSICMHTKKRVSSFRGNKIGLKDVITLRRHVETKVRAKIRKRKVTTKINRHDKINGKRKTARKQKMFQRAQELRRRAEDYHKCKIPPSARKPLCNWVRMAAAEHCHSSGLPYWLYLTAETLKNRMGRQPPPPTQQHSITDNSLSLKTPPECLLTPLPPSVDDNIKECPLAPLPPSPLPPSVDDNLKECLFVPLPPSPLPPSVDDNLKECLFVPLPPSPLPPSVDDNLKTPPLATQEAEVEKPPKPKRWRVDEVEQSPKPKRQREAEAQQLPKPKRRRLSKLRTRHCTQAWAIRINP.

An N-terminal signal peptide occupies residues 1–18; that stretch reads MRLRFWLLIWLLLGFISH. Asn-111 is a glycosylation site (N-linked (GlcNAc...) asparagine). 2 disordered regions span residues 242-262 and 335-402; these read RMGRQPPPPTQQHSITDNSLS and SPLP…LRTR. The span at 252-262 shows a compositional bias: polar residues; the sequence is QQHSITDNSLS. Residues 356–384 are compositionally biased toward basic and acidic residues; sequence EVEKPPKPKRWRVDEVEQSPKPKRQREAE. Residues 390 to 402 are compositionally biased toward basic residues; it reads KPKRRRLSKLRTR.

It belongs to the NPIP family.

It is found in the secreted. The chain is Nuclear pore complex-interacting protein family member B7 (NPIPB7) from Homo sapiens (Human).